The primary structure comprises 416 residues: Serine hydroxymethyltransferase (416 aa).

(6S)-5,6,7,8-tetrahydrofolate-binding positions include Leu118 and 122–124; that span reads GHL. Position 226 is an N6-(pyridoxal phosphate)lysine (Lys226). A (6S)-5,6,7,8-tetrahydrofolate-binding site is contributed by 350–352; sequence SPF.

Belongs to the SHMT family. As to quaternary structure, homodimer. The cofactor is pyridoxal 5'-phosphate.

It localises to the cytoplasm. It carries out the reaction (6R)-5,10-methylene-5,6,7,8-tetrahydrofolate + glycine + H2O = (6S)-5,6,7,8-tetrahydrofolate + L-serine. It participates in one-carbon metabolism; tetrahydrofolate interconversion. It functions in the pathway amino-acid biosynthesis; glycine biosynthesis; glycine from L-serine: step 1/1. Functionally, catalyzes the reversible interconversion of serine and glycine with tetrahydrofolate (THF) serving as the one-carbon carrier. This reaction serves as the major source of one-carbon groups required for the biosynthesis of purines, thymidylate, methionine, and other important biomolecules. Also exhibits THF-independent aldolase activity toward beta-hydroxyamino acids, producing glycine and aldehydes, via a retro-aldol mechanism. The chain is Serine hydroxymethyltransferase from Sulfurovum sp. (strain NBC37-1).